Here is a 286-residue protein sequence, read N- to C-terminus: Bifunctional protein FolD (286 aa).

NADP(+) contacts are provided by residues 164–166 (GAS), Ile189, and Ile230.

It belongs to the tetrahydrofolate dehydrogenase/cyclohydrolase family. As to quaternary structure, homodimer.

It carries out the reaction (6R)-5,10-methylene-5,6,7,8-tetrahydrofolate + NADP(+) = (6R)-5,10-methenyltetrahydrofolate + NADPH. The catalysed reaction is (6R)-5,10-methenyltetrahydrofolate + H2O = (6R)-10-formyltetrahydrofolate + H(+). Its pathway is one-carbon metabolism; tetrahydrofolate interconversion. Functionally, catalyzes the oxidation of 5,10-methylenetetrahydrofolate to 5,10-methenyltetrahydrofolate and then the hydrolysis of 5,10-methenyltetrahydrofolate to 10-formyltetrahydrofolate. This Wolinella succinogenes (strain ATCC 29543 / DSM 1740 / CCUG 13145 / JCM 31913 / LMG 7466 / NCTC 11488 / FDC 602W) (Vibrio succinogenes) protein is Bifunctional protein FolD.